A 1564-amino-acid chain; its full sequence is Tetratricopeptide repeat protein 37 (1564 aa).

TPR repeat units follow at residues 6–39 (VKAILKNARDAIRNKDYKEVLKQCKAVLKLEKNN), 40–73 (YNAWVFIGLAASELEQPDQAQAAYRKAVEIEPDQ), 75–110 (LAWQGLGNLYEKVNQKDFKEDLPNVYQKLLELYRSS), 116–149 (YEICKKLSDLYQQEKNYVPAAHTWHQLIKMKEDE), 237–271 (IYPLKVLALHYIKSGDITEEAICCYSKLLELDPLN), 306–339 (PSAWCCLAQAQLKIHKYAEALVSCDQAINGATQD), 420–453 (AEGHFLEGLLQYIQKNYSAAEISLQYALERKPEN), 456–492 (YHYYLGLNYWFMSKETRRDKTKAVTQFLKAAKMDPFM), 493–527 (SRAFYYLGHYYSEVAGDKSRARGCYKKAFELDDSD), 564–597 (KWAWLRRGLFYLRVGQHSKSVSDLHAALRADPKD), 598–631 (SNCWECLGEAYLSRGGYTTALKSFMKASELNPDS), 633–665 (YSVYKIASIKQILGTYKEAVNEYQQILMKSGEY), 678–713 (MLAKSALSDFLDLKAVDAIEKAIEFLARAIRLRPDL), 743–776 (LLGNDEEQQLLNKPEVLALGGRCYGRALRIQSTA), 861–894 (VAAWTNLGALYLMNGNIELSHQAFKVAQSLDPLY), 980–1013 (RTAFEMLGYLNEHLNLKKQASESYRRVVSILQER), 1020–1050 (NSALQHYGRSLCAVGQYQEAIQTFSSTPLTE), 1051–1084 (FDDLTGIALAFFKKGLLQESMKAYKQALSVAKSD), and 1400–1433 (HNAWHWLAEVYQSLGMMMDAEMCYRKSLQLASQQ).

This is Tetratricopeptide repeat protein 37 (ttc37) from Xenopus laevis (African clawed frog).